The following is a 219-amino-acid chain: Peptide methionine sulfoxide reductase MsrA (219 aa).

Cys58 is a catalytic residue.

It belongs to the MsrA Met sulfoxide reductase family.

It catalyses the reaction L-methionyl-[protein] + [thioredoxin]-disulfide + H2O = L-methionyl-(S)-S-oxide-[protein] + [thioredoxin]-dithiol. The enzyme catalyses [thioredoxin]-disulfide + L-methionine + H2O = L-methionine (S)-S-oxide + [thioredoxin]-dithiol. Has an important function as a repair enzyme for proteins that have been inactivated by oxidation. Catalyzes the reversible oxidation-reduction of methionine sulfoxide in proteins to methionine. The polypeptide is Peptide methionine sulfoxide reductase MsrA (Ectopseudomonas mendocina (strain ymp) (Pseudomonas mendocina)).